The primary structure comprises 158 residues: Large ribosomal subunit protein uL11 (158 aa).

The protein belongs to the universal ribosomal protein uL11 family. As to quaternary structure, part of the ribosomal stalk of the 50S ribosomal subunit. Interacts with L10 and the large rRNA to form the base of the stalk. L10 forms an elongated spine to which L12 dimers bind in a sequential fashion forming a multimeric L10(L12)X complex.

Functionally, forms part of the ribosomal stalk which helps the ribosome interact with GTP-bound translation factors. The sequence is that of Large ribosomal subunit protein uL11 from Methanosphaerula palustris (strain ATCC BAA-1556 / DSM 19958 / E1-9c).